Consider the following 416-residue polypeptide: Cyclin-L1-1 (416 aa).

Positions Lys-286–His-416 are disordered. Basic and acidic residues-rich tracts occupy residues Pro-304–Gly-315, Ser-328–Lys-374, Arg-384–Asp-393, and Arg-401–Lys-410.

This sequence belongs to the cyclin family. Cyclin L subfamily. Forms a complex with CDKG1. Interacts with MOS4 and associates with the spliceosome.

It localises to the nucleus. Cognate cyclin for CDKG1. Required for synapsis and male meiosis, and for the proper splicing of specific resistance (R) genes. Involved in regulation of DNA methylation and transcriptional silencing. The protein is Cyclin-L1-1 (CYCL1-1) of Arabidopsis thaliana (Mouse-ear cress).